The chain runs to 200 residues: Phosphatidylethanolamine N-methyltransferase B (200 aa).

At M1–D8 the chain is on the lumenal side. The helical intramembrane region spans L9–F29. Residues E30–L39 are Lumenal-facing. A helical membrane pass occupies residues I40–I58. Topologically, residues R59–G86 are cytoplasmic. The chain crosses the membrane as a helical span at residues D87–K107. I91–G93 provides a ligand contact to S-adenosyl-L-methionine. Over G108–N150 the chain is Lumenal. The helical transmembrane segment at Q151–T171 threads the bilayer. Residues F172–N200 lie on the Cytoplasmic side of the membrane. Position 174 to 175 (E174 to T175) interacts with S-adenosyl-L-methionine.

Belongs to the class VI-like SAM-binding methyltransferase superfamily. PEMT/PEM2 methyltransferase family.

The protein resides in the endoplasmic reticulum membrane. It is found in the mitochondrion membrane. It carries out the reaction a 1,2-diacyl-sn-glycero-3-phospho-N-methylethanolamine + S-adenosyl-L-methionine = a 1,2-diacyl-sn-glycero-3-phospho-N,N-dimethylethanolamine + S-adenosyl-L-homocysteine + H(+). The enzyme catalyses a 1,2-diacyl-sn-glycero-3-phospho-N,N-dimethylethanolamine + S-adenosyl-L-methionine = a 1,2-diacyl-sn-glycero-3-phosphocholine + S-adenosyl-L-homocysteine + H(+). It catalyses the reaction a 1,2-diacyl-sn-glycero-3-phosphoethanolamine + S-adenosyl-L-methionine = a 1,2-diacyl-sn-glycero-3-phospho-N-methylethanolamine + S-adenosyl-L-homocysteine + H(+). The protein operates within phospholipid metabolism; phosphatidylcholine biosynthesis. Catalyzes the three sequential steps of the methylation pathway of phosphatidylcholine biosynthesis, the SAM-dependent methylation of phosphatidylethanolamine (PE) to phosphatidylmonomethylethanolamine (PMME), PMME to phosphatidyldimethylethanolamine (PDME), and PDME to phosphatidylcholine (PC). This Dictyostelium discoideum (Social amoeba) protein is Phosphatidylethanolamine N-methyltransferase B (pemtB).